Here is a 537-residue protein sequence, read N- to C-terminus: Aminopeptidase Y (537 aa).

Positions 1 to 21 (MHFSLKQLAVAAFYATNLGSA) are cleaved as a signal peptide. A propeptide spanning residues 22–56 (YVIPQFFQEAFQQEEPIENYLPQLNDDDSSAVAAN) is cleaved from the precursor. Residues asparagine 85, asparagine 96, asparagine 115, asparagine 150, and asparagine 162 are each glycosylated (N-linked (GlcNAc...) asparagine). 2 residues coordinate Zn(2+): histidine 314 and aspartate 326. The active-site Proton acceptor is glutamate 358. Residue glutamate 359 coordinates Zn(2+). Asparagine 371 carries N-linked (GlcNAc...) asparagine glycosylation. Zn(2+) is bound at residue aspartate 387. A glycan (N-linked (GlcNAc...) asparagine) is linked at asparagine 427. Histidine 472 provides a ligand contact to Zn(2+). N-linked (GlcNAc...) asparagine glycosylation is present at asparagine 480.

This sequence belongs to the peptidase M28 family. M28A subfamily. Monomer. The cofactor is Zn(2+).

The protein localises to the vacuole. The catalysed reaction is Preferentially, release of N-terminal lysine.. The sequence is that of Aminopeptidase Y (APE3) from Saccharomyces cerevisiae (strain ATCC 204508 / S288c) (Baker's yeast).